Consider the following 1656-residue polypeptide: Probable phospholipid-transporting ATPase DNF3 (1656 aa).

The Lumenal portion of the chain corresponds to 1–164 (MGIADGQRRR…PRQLYAQFSK (164 aa)). The segment at 36–74 (ELEDINESKTFSGSDNNDKDDRDETSGNYAAEEDYEMEE) is disordered. The segment covering 51–60 (NNDKDDRDET) has biased composition (basic and acidic residues). The chain crosses the membrane as a helical span at residues 165–185 (LANTYFFIVAVLQMIPGWSTT). At 186-451 (GTYTTIIPLC…RTKAPKLQRK (266 aa)) the chain is on the cytoplasmic side. The chain crosses the membrane as a helical span at residues 452–472 (INMIIVFMVFVVATISLFSYL). Residues 473–495 (GHVLHKKKYIDQNKAWYLFQADA) lie on the Lumenal side of the membrane. A helical transmembrane segment spans residues 496–516 (GVAPTIMSFIIMYNTVIPLSL). At 517 to 1157 (YVTMEIIKVV…ISKMNAVSQE (641 aa)) the chain is on the cytoplasmic side. The active-site 4-aspartylphosphate intermediate is aspartate 566. ATP contacts are provided by aspartate 566, lysine 567, and threonine 568. Aspartate 566 contributes to the Mg(2+) binding site. Threonine 568 contacts Mg(2+). Serine 627 carries the post-translational modification Phosphoserine. ATP is bound by residues glutamate 765, phenylalanine 813, serine 815, lysine 818, lysine 838, arginine 1034, threonine 1035, threonine 1114, glycine 1115, aspartate 1116, 1167–1174 (VVVIDGAT), arginine 1202, and lysine 1208. Residues 1158-1178 (VDSGNIAHCVVVIDGATMAMF) form a helical membrane-spanning segment. At 1179–1318 (EGNPTYMSVF…MFSGSSLYEP (140 aa)) the chain is on the lumenal side. Aspartate 1229 lines the Mg(2+) pocket. ATP-binding residues include asparagine 1232 and aspartate 1233. A helical membrane pass occupies residues 1319 to 1339 (WSLSMFNTLFTSLPVLCIGMF). The Cytoplasmic segment spans residues 1340-1365 (EKDLKPMTLLTVPELYSYGRLSQGFN). The helical transmembrane segment at 1366-1386 (WLIFMEWVILATTNSLIITFL) threads the bilayer. The Lumenal portion of the chain corresponds to 1387 to 1395 (NVVMWGMSS). Residues 1396-1416 (LSDNTMYPLGLINFTAIVALI) traverse the membrane as a helical segment. At 1417 to 1432 (NVKSQFVEMHNRNWLA) the chain is on the cytoplasmic side. The chain crosses the membrane as a helical span at residues 1433–1453 (FTSVVLSCGGWLVWCCALPIL). Residues 1454 to 1473 (NNTDQIYDVAYGFYNHFGKD) lie on the Lumenal side of the membrane. The helical transmembrane segment at 1474–1494 (ITFWCTSLVLALLPITLDIVY) threads the bilayer. At 1495 to 1656 (KTFKVMIWPS…IIQARLKDLE (162 aa)) the chain is on the cytoplasmic side. The segment at 1554-1576 (PRTNSRASAKTHNSSIYSMSNGN) is disordered.

The protein belongs to the cation transport ATPase (P-type) (TC 3.A.3) family. Type IV subfamily. As to quaternary structure, component of a flippase complex consisting of DNF3 and YNR048W/CRF1. Interacts with YNR048W/CRF1; the interaction is direct and required for proper expression and endoplasmic reticulum (ER) export of either partner. Mg(2+) serves as cofactor.

It is found in the golgi apparatus. It localises to the trans-Golgi network membrane. Its subcellular location is the endosome membrane. The catalysed reaction is ATP + H2O + phospholipidSide 1 = ADP + phosphate + phospholipidSide 2.. The enzyme catalyses a 1,2-diacyl-sn-glycero-3-phosphocholine(out) + ATP + H2O = a 1,2-diacyl-sn-glycero-3-phosphocholine(in) + ADP + phosphate + H(+). It carries out the reaction a 1,2-diacyl-sn-glycero-3-phosphoethanolamine(out) + ATP + H2O = a 1,2-diacyl-sn-glycero-3-phosphoethanolamine(in) + ADP + phosphate + H(+). In terms of biological role, catalytic component of a P4-ATPase flippase complex which catalyzes the hydrolysis of ATP coupled to the transport of phosphatidylcholine and small amounts of phosphatidylethanolamine from the lumen to the cytosolic leaflet of the trans-Golgi network and ensures the maintenance of asymmetric distribution of phospholipids. May be involved in transport from early endosomes to the trans-Golgi network (TGN). This Saccharomyces cerevisiae (strain ATCC 204508 / S288c) (Baker's yeast) protein is Probable phospholipid-transporting ATPase DNF3 (DNF3).